Consider the following 437-residue polypeptide: MLDKNKQIWFIGIKGTGMASLALLLHDLGYNVAGSDIEKYTFTQVPLEKVGVDVKNFDPANIKSNDEQVIVKGNAFKEDNPEVKACIDKGVKWQSYPDTVEEIVQMHTSIGISGTHGKTSTTSLLSHVLGEVAPTSYLIGDGRGKGVEGSRFFVYEADEYRRHFLAYHPDYQIMTNIDFDHPDYFKDQADYTSAFQSAADQTKKALFVWGDDKRLQSLKTDIPKYTYGFKDTDDFQAVDIKKSTTGSKFHVLAHGKDLGEFEIHLFGDHSILNATAVIAVAYTEKVPMDDIREGMLTFKGAKRRFSEKDFGDIAVIDDYAHHPTEMRATIQAARQKFPDKKLVVVFQPHTFSRTKKYQKDFEEILRDVDKAYVTPIYASAREANGDISSEDLVKNIPGSEVIDLDNIADLTKNKNSVIVFMGAGDIPKYEDAFEKLL.

114–120 lines the ATP pocket; it reads GTHGKTS.

Belongs to the MurCDEF family.

The protein localises to the cytoplasm. The catalysed reaction is UDP-N-acetyl-alpha-D-muramate + L-alanine + ATP = UDP-N-acetyl-alpha-D-muramoyl-L-alanine + ADP + phosphate + H(+). Its pathway is cell wall biogenesis; peptidoglycan biosynthesis. Cell wall formation. In Lactobacillus helveticus (strain DPC 4571), this protein is UDP-N-acetylmuramate--L-alanine ligase.